Reading from the N-terminus, the 144-residue chain is Universal stress protein F (144 aa).

The protein belongs to the universal stress protein A family. In terms of assembly, homodimer.

In Salmonella typhi, this protein is Universal stress protein F (uspF).